Here is a 152-residue protein sequence, read N- to C-terminus: Transcriptional regulator MraZ (152 aa).

SpoVT-AbrB domains follow at residues 5–52 (ATLV…PLPE) and 81–124 (ASEC…DETT).

The protein belongs to the MraZ family. As to quaternary structure, forms oligomers.

The protein resides in the cytoplasm. It is found in the nucleoid. Functionally, negatively regulates its own expression and that of the subsequent genes in the proximal part of the division and cell wall (dcw) gene cluster. Acts by binding directly to DNA. May also regulate the expression of genes outside the dcw cluster. This is Transcriptional regulator MraZ from Shigella sonnei (strain Ss046).